The sequence spans 705 residues: FAD-dependent monooxygenase ATEG_03635 (705 aa).

FAD is bound by residues 86-115 (DVLI…IVDK), Val-208, 308-310 (RFY), and Ser-408.

Belongs to the PheA/TfdB FAD monooxygenase family. FAD is required as a cofactor.

It functions in the pathway secondary metabolite biosynthesis. In terms of biological role, FAD-dependent monooxygenase; part of the cluster A that mediates the biosynthesis of azasperpyranones, members of the azaphilone family that exhibit anti-cancer activities. Azasperpyranones are synthesized by 2 clusters, A and B. Cluster A is responsible for the production of the polyhydric phenol moiety while the azaphilonoid scaffold is produced by the cluster B. The non-reducing polyketide synthase ATEG_03629 produces 5-methyl orsellinic acid, which is then reduced to 5-methyl orsellinic aldehyde by the NRPS-like protein ATEG_03630. 5-methyl orsellinic aldehyde is then first hydroxylated by the FAD-dependent monooxygenase ATEG_03635 and subsequently hydroxylated by the cytochrome P450 monooxygenase ATEG_03631 to produce the unstable polyhydric phenol precursor of azasperpyranones. On the other hand, the polyketide synthase ATEG_07659 is responsible for producing the 3,5-dimethyloctadienone moiety from acetyl-CoA, three malonyl-CoA, and two S-adenosyl methionines (SAM). The 3,5-dimethyloctadienone moiety is then loaded onto the SAT domain of ATEG_07661 and extended with four malonyl-CoA and one SAM, which leads to the formation of 2,4-dihydroxy-6-(5,7-dimethyl-2-oxo-trans-3-trans-5-nonadienyl)-3-methylbenzaldehyde (compound 8) after reductive release and aldol condensation. The FAD-dependent monooxygenase ATEG_07662 is the next enzyme in the biosynthesis sequence and hydroxylates the side chain at the benzylic position of compound 8. In Aspergillus nidulans, afoF, the ortholog of the FAD-dependent oxygenase ATEG_07660, is the key enzyme for the biosynthesis of asperfuranone by catalyzing the hydroxylation at C-8 of to prevent the formation of a six-membered ring hemiacetal intermediate and thus facilitating the formation of a five-membered ring to produce asperfuranone. In Aspergillus terreus, ATEG_07660 is probably not functional, which leads to the formation of the six-membered ring hemiacetal intermediate presperpyranone instead of asperfuranone. Finally, ATEG_03636 is involved in the condensation of the polyhydric phenol moiety produced by cluster A and the perasperpyranone precursor produced by cluster B, to yield azasperpyranone A. Further modifications of azasperpyranone A result in the production of derivatives, including azasperpyranone B to F. The polypeptide is FAD-dependent monooxygenase ATEG_03635 (Aspergillus terreus (strain NIH 2624 / FGSC A1156)).